The sequence spans 344 residues: Probable magnesium transporter NIPA9 (344 aa).

Over 1–46 (MWESICLTLAATAGNNIGKVLQKKGTIILPPLSLKLKVLRAYAENK) the chain is Cytoplasmic. Transmembrane regions (helical) follow at residues 47–67 (PWAL…RALS) and 68–88 (LAPV…LSVF). Residues 89-98 (SHFYLKEVMN) are Cytoplasmic-facing. The chain crosses the membrane as a helical span at residues 99–119 (VFDWIGITVAGIGTIGVGAGG). At 120–125 (EEQEAS) the chain is on the extracellular side. A helical membrane pass occupies residues 126 to 146 (LISVFQLLWLALVVAILFVLL). The Cytoplasmic segment spans residues 147–166 (NAWLHIFKRQRREQELGEYE). Residues 167–187 (VVEEIIYGLESGILFGMASVV) form a helical membrane-spanning segment. Residues 188–191 (SKMG) are Extracellular-facing. The chain crosses the membrane as a helical span at residues 192-212 (FVFVEQGFSTMFIPMCISISI). The Cytoplasmic portion of the chain corresponds to 213–231 (CCSGTGFFYQTRGLKHGRA). The chain crosses the membrane as a helical span at residues 232-252 (IVVSTCAAVASIVTGVVAGMF). Over 253–265 (ALGEKLPTSPSGR) the chain is Extracellular. Residues 266 to 286 (LLLLLGWLLIMLGVVLLVTSS) form a helical membrane-spanning segment. The Cytoplasmic portion of the chain corresponds to 287 to 344 (RLIRHLPRSFRRSRQTSLERGFNIRRTTSHTPKDTNPSAVIQAATLHHLLSSPSKDKD).

It belongs to the NIPA (TC 2.A.7) family. In terms of assembly, homodimer.

The protein localises to the cell membrane. Its subcellular location is the early endosome. Its function is as follows. Acts as a Mg(2+) transporter. Can also transport other divalent cations such as Fe(2+), Sr(2+), Ba(2+), Mn(2+) and Co(2+) but to a much less extent than Mg(2+). In Arabidopsis thaliana (Mouse-ear cress), this protein is Probable magnesium transporter NIPA9.